Here is a 359-residue protein sequence, read N- to C-terminus: 3-dehydroquinate synthase (359 aa).

Residues 69–74 (DAEDGK), 103–107 (GAVTD), 127–128 (TT), Lys140, and Lys149 contribute to the NAD(+) site. Zn(2+) is bound by residues Glu182, His244, and His260.

It belongs to the sugar phosphate cyclases superfamily. Dehydroquinate synthase family. Requires NAD(+) as cofactor. Co(2+) serves as cofactor. It depends on Zn(2+) as a cofactor.

It localises to the cytoplasm. It carries out the reaction 7-phospho-2-dehydro-3-deoxy-D-arabino-heptonate = 3-dehydroquinate + phosphate. It participates in metabolic intermediate biosynthesis; chorismate biosynthesis; chorismate from D-erythrose 4-phosphate and phosphoenolpyruvate: step 2/7. Its function is as follows. Catalyzes the conversion of 3-deoxy-D-arabino-heptulosonate 7-phosphate (DAHP) to dehydroquinate (DHQ). The chain is 3-dehydroquinate synthase from Corynebacterium pseudotuberculosis (strain C231).